The primary structure comprises 255 residues: Probable transcriptional regulator ycf27 (255 aa).

Residues 9 to 122 (KILIADDESS…ELEARIRCVL (114 aa)) form the Response regulatory domain. At aspartate 58 the chain carries 4-aspartylphosphate. The H-T-H motif DNA-binding region spans 78–96 (DIPIIMLTALGDVTDRITG). The ompR/PhoB-type DNA-binding region spans 137 to 238 (SGIINIGFLK…SRGTGYLFQR (102 aa)).

It is found in the plastid. The protein resides in the chloroplast. Probable promoter-specific protein mediating the interaction between DNA and RNA polymerase. This Galdieria sulphuraria (Red alga) protein is Probable transcriptional regulator ycf27 (ycf27).